Reading from the N-terminus, the 144-residue chain is Ribosome-binding factor A (144 aa).

Disordered regions lie at residues 1–22 and 125–144; these read MPRHHQKKSSASGGGSQRQLRV and TPAVQKDLEQDPDSDREEEQ. Residues 134 to 144 are compositionally biased toward acidic residues; sequence QDPDSDREEEQ.

Belongs to the RbfA family. In terms of assembly, monomer. Binds 30S ribosomal subunits, but not 50S ribosomal subunits or 70S ribosomes.

The protein localises to the cytoplasm. One of several proteins that assist in the late maturation steps of the functional core of the 30S ribosomal subunit. Associates with free 30S ribosomal subunits (but not with 30S subunits that are part of 70S ribosomes or polysomes). Required for efficient processing of 16S rRNA. May interact with the 5'-terminal helix region of 16S rRNA. This chain is Ribosome-binding factor A, found in Bradyrhizobium diazoefficiens (strain JCM 10833 / BCRC 13528 / IAM 13628 / NBRC 14792 / USDA 110).